Here is a 565-residue protein sequence, read N- to C-terminus: Arginine--tRNA ligase (565 aa).

The 'HIGH' region motif lies at 128–138 (ANPTGPLHVGH).

This sequence belongs to the class-I aminoacyl-tRNA synthetase family. In terms of assembly, monomer.

The protein resides in the cytoplasm. It catalyses the reaction tRNA(Arg) + L-arginine + ATP = L-arginyl-tRNA(Arg) + AMP + diphosphate. This is Arginine--tRNA ligase from Albidiferax ferrireducens (strain ATCC BAA-621 / DSM 15236 / T118) (Rhodoferax ferrireducens).